Consider the following 231-residue polypeptide: Dephospho-CoA kinase (231 aa).

Positions 29–231 (RVGLTGGIAS…IAGALRFDRR (203 aa)) constitute a DPCK domain. Position 37–42 (37–42 (ASGKST)) interacts with ATP.

It belongs to the CoaE family.

It is found in the cytoplasm. The enzyme catalyses 3'-dephospho-CoA + ATP = ADP + CoA + H(+). The protein operates within cofactor biosynthesis; coenzyme A biosynthesis; CoA from (R)-pantothenate: step 5/5. Its function is as follows. Catalyzes the phosphorylation of the 3'-hydroxyl group of dephosphocoenzyme A to form coenzyme A. This chain is Dephospho-CoA kinase, found in Cutibacterium acnes (strain DSM 16379 / KPA171202) (Propionibacterium acnes).